We begin with the raw amino-acid sequence, 404 residues long: Cystinosin homolog (404 aa).

Over 20 to 123 (TNNLVVRQKE…FARITVIRSH (104 aa)) the chain is Lumenal. N-linked (GlcNAc...) asparagine glycosylation is found at Asn46, Asn53, Asn79, and Asn97. A helical membrane pass occupies residues 124 to 144 (FLAILIQIVGWTYFFAWSISF). The PQ-loop 1 domain occupies 125–191 (LAILIQIVGW…MYYNSHVKNE (67 aa)). Residues 145-163 (YPQMYLNFKRKSVVGLNFD) are Cytoplasmic-facing. Residues 164 to 184 (FLSLNLVGFCAYAIFNLLMYY) form a helical membrane-spanning segment. Residues 185 to 207 (NSHVKNEYNIVNPRSPPPVLLND) are Lumenal-facing. A helical membrane pass occupies residues 208-228 (VVFAVHAFLACFITILQCLFY). Topologically, residues 229–238 (ERDNQSVSSK) are cytoplasmic. Residues 239 to 259 (CIALMIVLISFGFCSAAATVL) traverse the membrane as a helical segment. Over 260–263 (RKIQ) the chain is Lumenal. The chain crosses the membrane as a helical span at residues 264 to 285 (LLSFVTSLSYIKMAVTCCKYFP). Residues 266 to 327 (SFVTSLSYIK…MILQAVNVND (62 aa)) enclose the PQ-loop 2 domain. The Cytoplasmic portion of the chain corresponds to 286-295 (QAYFNYTRKS). A helical membrane pass occupies residues 296–316 (TVGWSIGNIMLDFTGGTLDIL). Over 317–337 (QMILQAVNVNDWSAFYANPVK) the chain is Lumenal. The chain crosses the membrane as a helical span at residues 338–358 (FGLGFVSIFFDIIFMVQHYVL). Over 359–404 (YPNAEVPHNEYHGVDNPNPDNIARDAEQYAGDSESMESTEPIIVHD) the chain is Cytoplasmic.

Belongs to the cystinosin family.

The protein localises to the lysosome membrane. It localises to the cytoplasmic vesicle. The protein resides in the phagosome. It carries out the reaction L-cystine(out) + H(+)(out) = L-cystine(in) + H(+)(in). Its function is as follows. Cystine/H(+) symporter that mediates export of cystine, the oxidized dimer of cysteine, from lysosomes. May play a role in the degradation of engulfed apoptotic cells. The chain is Cystinosin homolog (ctns-1) from Caenorhabditis elegans.